Consider the following 340-residue polypeptide: KRR1 small subunit processome component homolog (340 aa).

The KH domain occupies 124-192 (DIIKIGNLVH…VRDIVLETMN (69 aa)). The segment covering 228-244 (KNKNISKRKQPKSKKPK) has biased composition (basic residues). 2 disordered regions span residues 228–259 (KNKN…ESKI) and 271–324 (NQEQ…KVDV). The stretch at 269 to 302 (FLNQEQKQAKRNQERSAKQADAAKKQDERRNKDF) forms a coiled coil. 2 stretches are compositionally biased toward basic and acidic residues: residues 275–301 (KQAK…RNKD) and 309–324 (APSR…KVDV).

This sequence belongs to the KRR1 family. Monomer. Component of the ribosomal small subunit (SSU) processome.

It is found in the nucleus. The protein localises to the nucleolus. Its function is as follows. Required for 40S ribosome biogenesis. Involved in nucleolar processing of pre-18S ribosomal RNA and ribosome assembly. Binds to RNA. Required for female germline development, cell viability during eye development and for survival of dividing cells and epithelial cells during early wing disk development. In Drosophila persimilis (Fruit fly), this protein is KRR1 small subunit processome component homolog.